Here is a 362-residue protein sequence, read N- to C-terminus: Talin rod domain-containing protein 1 (362 aa).

A disordered region spans residues 1–27; that stretch reads MASGSAGKPTGEAASPAPGSAVGGASS. N-acetylalanine is present on Ala-2. Over residues 9–27 the composition is skewed to low complexity; sequence PTGEAASPAPGSAVGGASS.

May homodimerize. Interacts with F-actin. Ubiquitous.

Actin-binding protein which may have an oncogenic function and regulates cell proliferation, migration and invasion in cancer cells. In Mus musculus (Mouse), this protein is Talin rod domain-containing protein 1.